A 208-amino-acid polypeptide reads, in one-letter code: Protein-L-isoaspartate O-methyltransferase (208 aa).

Ser-59 is an active-site residue.

It belongs to the methyltransferase superfamily. L-isoaspartyl/D-aspartyl protein methyltransferase family.

The protein localises to the cytoplasm. It carries out the reaction [protein]-L-isoaspartate + S-adenosyl-L-methionine = [protein]-L-isoaspartate alpha-methyl ester + S-adenosyl-L-homocysteine. Its function is as follows. Catalyzes the methyl esterification of L-isoaspartyl residues in peptides and proteins that result from spontaneous decomposition of normal L-aspartyl and L-asparaginyl residues. It plays a role in the repair and/or degradation of damaged proteins. In Klebsiella pneumoniae (strain 342), this protein is Protein-L-isoaspartate O-methyltransferase.